The chain runs to 561 residues: MPSNESTCLGSDRNMQTAWKLNASTPGFTPKKLRVVCIGAGLSGLTLAYKLKHERPMDFVDLRIYEKNHEVGGTWLDNVYPGVGCDIPSPSYVFPFEPNPDWSKFYVGGAEIQQYILRTTAKYGLKERIVFNTRLLKAEWNEDSAKWKLQLEQDGRVFDDETDVLINGTGCLSQWKWPDIEGLDCFKGKLLHSARWDPEYNWEGKRIAVIGNGSSALQLVPSLQPKAAKLVNYIRHPTWVSVNFCPDLTRDGMGSNFEFTEEEKQQFRDDPEMFFQYRKKVEHGVNTVLQMMISGSGEHKFLHETVEGLMRQRLADRPDLIDKMIPNYEIGCRRLSPGDGYLEALQAANARPSFANINRITPTGFETDEGEEEFDLIACATGFNTSYIPPFKMTGRGGRRLDVEWKDKPAAYFATCAAGFPNYFIFAGPNAPIGHGSVNRMIWFQADYMLNWVEKIATEDIRSVAVKDSAVRDFNEFAKENLKRFVWSKGCHAWYSKKTDGEDNIVTAMYPGSLLHFKVYLDKIRGEHFDIQYNTSNMFGFLGNGELALEREKDGDMAFYM.

Residues 74-77 (TWLD), 86-87 (DI), and tyrosine 92 each bind FAD. Residue 84–86 (GCD) coordinates NADP(+). NADP(+) contacts are provided by residues 212 to 218 (NGSSALQ) and 235 to 236 (RH).

The protein belongs to the FAD-binding monooxygenase family. It depends on FAD as a cofactor.

It functions in the pathway secondary metabolite biosynthesis. Its function is as follows. FAD-binding monooxygenase; part of the gene cluster that mediates the biosynthesis of azaterrilone A and other azaphilones, a class of fungal metabolites characterized by a highly oxygenated pyrano-quinone bicyclic core and exhibiting a broad range of bioactivities. The first step of the pathway begins with the non-reducing polyketide synthase tazA that assembles one acetyl-CoA starter unit, five malonyl-CoA units, and catalyzes a series of Claisen condensations, methylation, PT-mediated cyclization, and finally releases the first hexaketide precursor through the R-domain. The tazA product then undergoes reduction on its terminal ketone and the following pyran-ring formation by yet undetermined enzyme(s). Dehydration and enoyl reduction, possibly involving the trans-enoyl reductase tazE leads to the next intermediate. TazD is predicted as an acetyltransferase and might catalyze the acetylation steps leading to the synthesis of azaterrilone A. Azaterrilone A is not the final product of the taz pathway and both the highly reducing polyketide synthase tazB and the dual enzyme tazHJ catalyze late steps of the pathway, leading to the production of the 2 final stereoisomers that contain additional polyketide modification whose structures have still to be determined. This chain is FAD-binding monooxygenase tazF, found in Aspergillus terreus (strain NIH 2624 / FGSC A1156).